Consider the following 115-residue polypeptide: Large ribosomal subunit protein eL30 (115 aa).

Phosphoserine occurs at positions 10 and 16. Lys26 bears the N6-acetyllysine; alternate mark. Residue Lys26 forms a Glycyl lysine isopeptide (Lys-Gly) (interchain with G-Cter in SUMO2); alternate linkage.

Belongs to the eukaryotic ribosomal protein eL30 family. As to quaternary structure, component of the large ribosomal subunit.

The protein localises to the cytoplasm. Its function is as follows. Component of the large ribosomal subunit. The ribosome is a large ribonucleoprotein complex responsible for the synthesis of proteins in the cell. This is Large ribosomal subunit protein eL30 (RPL30) from Homo sapiens (Human).